A 484-amino-acid polypeptide reads, in one-letter code: Probable cobyric acid synthase (484 aa).

The GATase cobBQ-type domain occupies Glu-247–Phe-433. Residue Cys-325 is the Nucleophile of the active site. The active site involves His-425.

Belongs to the CobB/CobQ family. CobQ subfamily.

Its pathway is cofactor biosynthesis; adenosylcobalamin biosynthesis. Catalyzes amidations at positions B, D, E, and G on adenosylcobyrinic A,C-diamide. NH(2) groups are provided by glutamine, and one molecule of ATP is hydrogenolyzed for each amidation. This Thermococcus onnurineus (strain NA1) protein is Probable cobyric acid synthase.